Reading from the N-terminus, the 171-residue chain is S-ribosylhomocysteine lyase (171 aa).

Residues H54, H58, and C128 each contribute to the Fe cation site.

Belongs to the LuxS family. Homodimer. It depends on Fe cation as a cofactor.

It carries out the reaction S-(5-deoxy-D-ribos-5-yl)-L-homocysteine = (S)-4,5-dihydroxypentane-2,3-dione + L-homocysteine. Involved in the synthesis of autoinducer 2 (AI-2) which is secreted by bacteria and is used to communicate both the cell density and the metabolic potential of the environment. The regulation of gene expression in response to changes in cell density is called quorum sensing. Catalyzes the transformation of S-ribosylhomocysteine (RHC) to homocysteine (HC) and 4,5-dihydroxy-2,3-pentadione (DPD). This is S-ribosylhomocysteine lyase from Photorhabdus laumondii subsp. laumondii (strain DSM 15139 / CIP 105565 / TT01) (Photorhabdus luminescens subsp. laumondii).